A 335-amino-acid polypeptide reads, in one-letter code: Proline racemase (335 aa).

The active-site Proton acceptor is the C91. Catalysis depends on C256, which acts as the Proton donor.

It belongs to the proline racemase family.

It carries out the reaction L-proline = D-proline. Inhibited by pyrrole-2-carboxylate in vitro. In terms of biological role, catalyzes the reversible interconversion of L- and D-proline. Likely functions as the proline racemase necessary for D-proline generation in order to discriminate it from the L-proline used for protein synthesis. The sequence is that of Proline racemase from Acetoanaerobium sticklandii (strain ATCC 12662 / DSM 519 / JCM 1433 / CCUG 9281 / NCIMB 10654 / HF) (Clostridium sticklandii).